The following is a 144-amino-acid chain: MLKGIHPAISPELLKVLAEMGHGDELVLSDAHFPAHSIHSKVIRADGIGVATLLEGISALFEFDQYVEAPLAMMQAVPGDTLDPSVEERYLAAIKKVNGSTPKVERVERFAFYDRAKTAYAVVITGELAKYGNIIIKKGVTPVK.

Residue H22 is the Proton donor of the active site. Substrate-binding positions include D30, R109, and 131-133 (YGN).

This sequence belongs to the RbsD / FucU family. FucU mutarotase subfamily. As to quaternary structure, homodecamer.

It localises to the cytoplasm. It carries out the reaction alpha-L-fucose = beta-L-fucose. It functions in the pathway carbohydrate metabolism; L-fucose metabolism. Involved in the anomeric conversion of L-fucose. In Actinobacillus pleuropneumoniae serotype 5b (strain L20), this protein is L-fucose mutarotase.